The chain runs to 467 residues: Gamma-aminobutyric acid receptor subunit gamma-3 (467 aa).

The N-terminal stretch at 1 to 17 is a signal peptide; it reads MAAKLLLLLCLFSGLHA. Topologically, residues 18-256 are extracellular; the sequence is RSRRVEEDEN…FELSRRMGYF (239 aa). N-linked (GlcNAc...) asparagine glycosylation occurs at N110. C171 and C185 are joined by a disulfide. N-linked (GlcNAc...) asparagine glycosylation is present at N228. The chain crosses the membrane as a helical span at residues 257-277; the sequence is TIQTYIPCILTVVLSWVSFWI. At 278–283 the chain is on the cytoplasmic side; that stretch reads KKDATP. A helical transmembrane segment spans residues 284-303; the sequence is ARTTLGITTVLTMTTLSTIA. Residues 304-311 are Extracellular-facing; the sequence is RKSLPRVS. Residues 312 to 332 form a helical membrane-spanning segment; the sequence is YVTAMDLFVTVCFLFVFAALM. The Cytoplasmic portion of the chain corresponds to 333–446; the sequence is EYATLNYYSS…DVSELDSYSR (114 aa). A helical membrane pass occupies residues 447–467; sequence VFFPTSFLLFNLVYWVGYLYL.

This sequence belongs to the ligand-gated ion channel (TC 1.A.9) family. Gamma-aminobutyric acid receptor (TC 1.A.9.5) subfamily. GABRG3 sub-subfamily. In terms of assembly, heteropentamer, formed by a combination of alpha (GABRA1-6), beta (GABRB1-3), gamma (GABRG1-3), delta (GABRD), epsilon (GABRE), rho (GABRR1-3), pi (GABRP) and theta (GABRQ) chains, each subunit exhibiting distinct physiological and pharmacological properties. May be palmitoylated. Expressed in brain.

The protein localises to the postsynaptic cell membrane. The protein resides in the cell membrane. The catalysed reaction is chloride(in) = chloride(out). Gamma subunit of the heteropentameric ligand-gated chloride channel gated by gamma-aminobutyric acid (GABA), a major inhibitory neurotransmitter in the brain. GABA-gated chloride channels, also named GABA(A) receptors (GABAAR), consist of five subunits arranged around a central pore and contain GABA active binding site(s) located at the alpha and beta subunit interface(s). When activated by GABA, GABAARs selectively allow the flow of chloride across the cell membrane down their electrochemical gradient. This Mus musculus (Mouse) protein is Gamma-aminobutyric acid receptor subunit gamma-3.